Here is a 371-residue protein sequence, read N- to C-terminus: Barbiturase 1 (371 aa).

The interval 1–103 (MPDAIEVRKV…TIFATVPPED (103 aa)) is RU A. Residues arginine 53 and 82 to 83 (SG) contribute to the substrate site. Residues 115 to 250 (RLTVGFAMSE…AQVVVVGNAP (136 aa)) are RU B. The active site involves lysine 165. Substrate contacts are provided by residues asparagine 197 and 233-234 (SS). Residue serine 233 is the Nucleophile of the active site. The interval 256–371 (YRIGHSVMKD…GPVAAIVDLG (116 aa)) is RU C. Residue glutamate 304 coordinates Mg(2+). Residues lysine 331 and 350 to 351 (SV) contribute to the substrate site. Mg(2+) contacts are provided by alanine 353, glutamine 356, glycine 357, proline 358, and glycine 361.

The protein belongs to the cyclic amide hydrolase (CyAH) family. In terms of assembly, homotetramer.

The enzyme catalyses barbiturate + H2O = 3-oxo-3-ureidopropanoate. It functions in the pathway pyrimidine metabolism; uracil degradation via oxidative pathway; malonate and urea from uracil: step 2/3. With respect to regulation, inhibited by cyanuric acid. Responsible for the hydrolysis of barbituric acid (2,4,6-trihydroxy-1,3-pyrimidine), an intermediate in the oxidative catabolism of pyrimidines. Catalyzes the hydrolytic opening of the pyrimidine ring of barbituric acid to yield ureidomalonic acid. The sequence is that of Barbiturase 1 from Nocardioides sp. (strain ATCC BAA-499 / JS614).